The sequence spans 512 residues: GMP synthase [glutamine-hydrolyzing] (512 aa).

The Glutamine amidotransferase type-1 domain maps to 7 to 197; sequence TIIVLDFGSQ…VFGVCGCSEG (191 aa). Cys84 (nucleophile) is an active-site residue. Residues His171 and Glu173 contribute to the active site. One can recognise a GMPS ATP-PPase domain in the interval 198-387; sequence WNMENFIEVE…LGIPDEIVWR (190 aa). 225–231 contributes to the ATP binding site; it reads SGGVDSS.

As to quaternary structure, homodimer.

It carries out the reaction XMP + L-glutamine + ATP + H2O = GMP + L-glutamate + AMP + diphosphate + 2 H(+). The protein operates within purine metabolism; GMP biosynthesis; GMP from XMP (L-Gln route): step 1/1. In terms of biological role, catalyzes the synthesis of GMP from XMP. This is GMP synthase [glutamine-hydrolyzing] from Bacillus cereus (strain ATCC 10987 / NRS 248).